Reading from the N-terminus, the 312-residue chain is Ribonuclease Z (312 aa).

Residues His-63, His-65, Asp-67, His-68, His-140, Asp-211, and His-269 each contribute to the Zn(2+) site. The active-site Proton acceptor is the Asp-67.

The protein belongs to the RNase Z family. As to quaternary structure, homodimer. The cofactor is Zn(2+).

The enzyme catalyses Endonucleolytic cleavage of RNA, removing extra 3' nucleotides from tRNA precursor, generating 3' termini of tRNAs. A 3'-hydroxy group is left at the tRNA terminus and a 5'-phosphoryl group is left at the trailer molecule.. In terms of biological role, zinc phosphodiesterase, which displays some tRNA 3'-processing endonuclease activity. Probably involved in tRNA maturation, by removing a 3'-trailer from precursor tRNA. This chain is Ribonuclease Z, found in Shouchella clausii (strain KSM-K16) (Alkalihalobacillus clausii).